A 194-amino-acid chain; its full sequence is UPF0232 protein MSMEG_0004/MSMEI_0006 (194 aa).

The span at 1–14 shows a compositional bias: acidic residues; that stretch reads MTGPFDDDGPEEDA. Residues 1 to 81 form a disordered region; sequence MTGPFDDDGP…GPGPDARDPQ (81 aa). Residues 30–52 show a composition bias toward basic and acidic residues; it reads DLVRRTLEEARGAARSQGKDVGR.

Belongs to the UPF0232 family.

The polypeptide is UPF0232 protein MSMEG_0004/MSMEI_0006 (Mycolicibacterium smegmatis (strain ATCC 700084 / mc(2)155) (Mycobacterium smegmatis)).